The chain runs to 150 residues: Large ribosomal subunit protein bL9 (150 aa).

It belongs to the bacterial ribosomal protein bL9 family.

Functionally, binds to the 23S rRNA. The protein is Large ribosomal subunit protein bL9 of Serratia proteamaculans (strain 568).